The chain runs to 360 residues: Aminomethyltransferase (360 aa).

The protein belongs to the GcvT family. The glycine cleavage system is composed of four proteins: P, T, L and H.

It carries out the reaction N(6)-[(R)-S(8)-aminomethyldihydrolipoyl]-L-lysyl-[protein] + (6S)-5,6,7,8-tetrahydrofolate = N(6)-[(R)-dihydrolipoyl]-L-lysyl-[protein] + (6R)-5,10-methylene-5,6,7,8-tetrahydrofolate + NH4(+). Its function is as follows. The glycine cleavage system catalyzes the degradation of glycine. This chain is Aminomethyltransferase, found in Pseudomonas syringae pv. tomato (strain ATCC BAA-871 / DC3000).